A 128-amino-acid polypeptide reads, in one-letter code: Small ribosomal subunit protein uS11 (128 aa).

This sequence belongs to the universal ribosomal protein uS11 family. Part of the 30S ribosomal subunit. Interacts with proteins S7 and S18. Binds to IF-3.

In terms of biological role, located on the platform of the 30S subunit, it bridges several disparate RNA helices of the 16S rRNA. Forms part of the Shine-Dalgarno cleft in the 70S ribosome. This chain is Small ribosomal subunit protein uS11, found in Wolbachia pipientis subsp. Culex pipiens (strain wPip).